Reading from the N-terminus, the 525-residue chain is Ribosomal protein S6 kinase beta-1 (525 aa).

The segment at 1–54 (MRRRRRRDGFYPAPDFRDREAEDMAGVFDIDLDQPEDAGSEDELEEGGQLNESM) is disordered. A TOS motif motif is present at residues 28–32 (FDIDL). Acidic residues predominate over residues 30–46 (IDLDQPEDAGSEDELEE). The Protein kinase domain maps to 91 to 352 (FELLRVLGKG…AGEVQAHPFF (262 aa)). ATP-binding positions include 97-105 (LGKGGYGKV) and K123. D218 functions as the Proton acceptor in the catalytic mechanism. At T252 the chain carries Phosphothreonine; by PDPK1. Residues 353–423 (RHINWEELLA…VAPSVLESVK (71 aa)) enclose the AGC-kinase C-terminal domain. The interval 380-399 (SQFDSKFTRQTPVDSPDDST) is disordered. The segment covering 381–399 (QFDSKFTRQTPVDSPDDST) has biased composition (polar residues). Position 394 is a phosphoserine (S394). T412 carries the post-translational modification Phosphothreonine; by MTOR, NEK6 and NEK7. The segment at 424 to 525 (EKFSFEPKIR…KRPEHLRMNL (102 aa)) is autoinhibitory domain. Phosphoserine is present on residues S434 and S441. Phosphothreonine is present on T444. A phosphoserine mark is found at S447 and S452. N6-acetyllysine is present on K516.

This sequence belongs to the protein kinase superfamily. AGC Ser/Thr protein kinase family. S6 kinase subfamily. As to quaternary structure, interacts with PPP1R9A/neurabin-1. Interacts with RPTOR. Interacts with IRS1. Interacts with EIF3B and EIF3C. Interacts with TRAF4. Interacts with POLDIP3. Interacts (via N-terminus) with IER5. (Microbial infection) Interacts with Mumps virus phosphoprotein; this interaction may play a role in the viral replication and transcription. In terms of processing, phosphorylation at Thr-412 is regulated by mTORC1. The phosphorylation at this site is maintained by an agonist-dependent autophosphorylation mechanism. Activated by phosphorylation at Thr-252 by PDPK1. Dephosphorylation by PPP1CC at Thr-412 in mitochondrion. As to expression, widely expressed.

It is found in the synapse. It localises to the synaptosome. The protein localises to the mitochondrion outer membrane. The protein resides in the mitochondrion. Its subcellular location is the nucleus. It is found in the cytoplasm. The catalysed reaction is L-seryl-[protein] + ATP = O-phospho-L-seryl-[protein] + ADP + H(+). It carries out the reaction L-threonyl-[protein] + ATP = O-phospho-L-threonyl-[protein] + ADP + H(+). Its activity is regulated as follows. Activation requires multiple phosphorylation events on serine/threonine residues. Activation appears to be first mediated by phosphorylation of multiple sites in the autoinhibitory domain, which facilitates phosphorylation at Thr-412, disrupting the autoinhibitory mechanism and allowing phosphorylation of Thr-252 by PDPK1. The active conformation of the kinase is believed to be stabilized by a mechanism involving three conserved phosphorylation sites located in the kinase domain activation loop (Thr-252) and in the AGC-kinase C-terminal domain (Ser-394 in the middle of the tail/linker region and Thr-412 within a hydrophobic motif at its end). Activated by mTORC1; isoform Alpha I and isoform Alpha II are sensitive to rapamycin, which inhibits activating phosphorylation at Thr-412. Activated by PDPK1. In terms of biological role, serine/threonine-protein kinase that acts downstream of mTOR signaling in response to growth factors and nutrients to promote cell proliferation, cell growth and cell cycle progression. Regulates protein synthesis through phosphorylation of EIF4B, RPS6 and EEF2K, and contributes to cell survival by repressing the pro-apoptotic function of BAD. Under conditions of nutrient depletion, the inactive form associates with the EIF3 translation initiation complex. Upon mitogenic stimulation, phosphorylation by the mechanistic target of rapamycin complex 1 (mTORC1) leads to dissociation from the EIF3 complex and activation. The active form then phosphorylates and activates several substrates in the pre-initiation complex, including the EIF2B complex and the cap-binding complex component EIF4B. Also controls translation initiation by phosphorylating a negative regulator of EIF4A, PDCD4, targeting it for ubiquitination and subsequent proteolysis. Promotes initiation of the pioneer round of protein synthesis by phosphorylating POLDIP3/SKAR. In response to IGF1, activates translation elongation by phosphorylating EEF2 kinase (EEF2K), which leads to its inhibition and thus activation of EEF2. Also plays a role in feedback regulation of mTORC2 by mTORC1 by phosphorylating MAPKAP1/SIN1, MTOR and RICTOR, resulting in the inhibition of mTORC2 and AKT1 signaling. Also involved in feedback regulation of mTORC1 and mTORC2 by phosphorylating DEPTOR. Mediates cell survival by phosphorylating the pro-apoptotic protein BAD and suppressing its pro-apoptotic function. Phosphorylates mitochondrial URI1 leading to dissociation of a URI1-PPP1CC complex. The free mitochondrial PPP1CC can then dephosphorylate RPS6KB1 at Thr-412, which is proposed to be a negative feedback mechanism for the RPS6KB1 anti-apoptotic function. Mediates TNF-alpha-induced insulin resistance by phosphorylating IRS1 at multiple serine residues, resulting in accelerated degradation of IRS1. In cells lacking functional TSC1-2 complex, constitutively phosphorylates and inhibits GSK3B. May be involved in cytoskeletal rearrangement through binding to neurabin. Phosphorylates and activates the pyrimidine biosynthesis enzyme CAD, downstream of MTOR. Following activation by mTORC1, phosphorylates EPRS and thereby plays a key role in fatty acid uptake by adipocytes and also most probably in interferon-gamma-induced translation inhibition. The protein is Ribosomal protein S6 kinase beta-1 (RPS6KB1) of Homo sapiens (Human).